The following is a 231-amino-acid chain: 2,3-bisphosphoglycerate-dependent phosphoglycerate mutase (231 aa).

Residues 10 to 17, 23 to 24, Arg-62, 89 to 92, Lys-100, 116 to 117, and 185 to 186 contribute to the substrate site; these read RHGQSEWN, TG, ERHY, RR, and GN. His-11 acts as the Tele-phosphohistidine intermediate in catalysis. Glu-89 (proton donor/acceptor) is an active-site residue.

It belongs to the phosphoglycerate mutase family. BPG-dependent PGAM subfamily. As to quaternary structure, homodimer.

It catalyses the reaction (2R)-2-phosphoglycerate = (2R)-3-phosphoglycerate. It participates in carbohydrate degradation; glycolysis; pyruvate from D-glyceraldehyde 3-phosphate: step 3/5. In terms of biological role, catalyzes the interconversion of 2-phosphoglycerate and 3-phosphoglycerate. This is 2,3-bisphosphoglycerate-dependent phosphoglycerate mutase from Buchnera aphidicola subsp. Acyrthosiphon pisum (strain 5A).